The chain runs to 89 residues: Small ribosomal subunit protein uS15 (89 aa).

Belongs to the universal ribosomal protein uS15 family. In terms of assembly, part of the 30S ribosomal subunit. Forms a bridge to the 50S subunit in the 70S ribosome, contacting the 23S rRNA.

In terms of biological role, one of the primary rRNA binding proteins, it binds directly to 16S rRNA where it helps nucleate assembly of the platform of the 30S subunit by binding and bridging several RNA helices of the 16S rRNA. Its function is as follows. Forms an intersubunit bridge (bridge B4) with the 23S rRNA of the 50S subunit in the ribosome. This Pelotomaculum thermopropionicum (strain DSM 13744 / JCM 10971 / SI) protein is Small ribosomal subunit protein uS15.